We begin with the raw amino-acid sequence, 355 residues long: Protein FIP1 (355 aa).

A run of 4 helical transmembrane segments spans residues 42–62, 72–92, 113–133, and 149–169; these read YLYM…PWMF, LLCC…QYFV, VVRL…LVIV, and IIML…IGYV. Positions 220 to 337 form a coiled coil; it reads LHFLSEEILC…RMSNSELQKE (118 aa). A compositionally biased stretch (basic and acidic residues) spans 331–340; sequence NSELQKEVAS. The tract at residues 331-355 is disordered; it reads NSELQKEVASTRRKQMLETTTSEQP.

The protein belongs to the TMEM192 family. In terms of assembly, interacts with FRI.

The protein resides in the membrane. The protein is Protein FIP1 of Arabidopsis thaliana (Mouse-ear cress).